Reading from the N-terminus, the 93-residue chain is YcgL domain-containing protein AHA_2135 (93 aa).

One can recognise a YcgL domain in the interval 1–85 (MLCAVYKSRK…PPENLLEQHK (85 aa)).

The protein is YcgL domain-containing protein AHA_2135 of Aeromonas hydrophila subsp. hydrophila (strain ATCC 7966 / DSM 30187 / BCRC 13018 / CCUG 14551 / JCM 1027 / KCTC 2358 / NCIMB 9240 / NCTC 8049).